Consider the following 505-residue polypeptide: ATP synthase subunit alpha, cyanelle (505 aa).

170 to 177 lines the ATP pocket; the sequence is GDRQTGKT.

It belongs to the ATPase alpha/beta chains family. In terms of assembly, F-type ATPases have 2 components, CF(1) - the catalytic core - and CF(0) - the membrane proton channel. CF(1) has five subunits: alpha(3), beta(3), gamma(1), delta(1), epsilon(1). CF(0) has four main subunits: a, b, b' and c.

The protein localises to the plastid. It is found in the cyanelle thylakoid membrane. The catalysed reaction is ATP + H2O + 4 H(+)(in) = ADP + phosphate + 5 H(+)(out). Produces ATP from ADP in the presence of a proton gradient across the membrane. The alpha chain is a regulatory subunit. The protein is ATP synthase subunit alpha, cyanelle of Cyanophora paradoxa.